The following is an 88-amino-acid chain: Small ribosomal subunit protein bS20 (88 aa).

Positions 1-25 (MANSAQARKRARQAVAQNAHNSSLR) are disordered.

This sequence belongs to the bacterial ribosomal protein bS20 family.

Binds directly to 16S ribosomal RNA. This is Small ribosomal subunit protein bS20 from Cupriavidus pinatubonensis (strain JMP 134 / LMG 1197) (Cupriavidus necator (strain JMP 134)).